A 509-amino-acid chain; its full sequence is MMQPSTSTNSIRPVRTRIAPSPTGFPHVGTAYIALFNLAFAKAHGGEFILRIEDTDQTRSTEQSEKMILDALRWVGLDWAEGPDIGGPHAPYRQSERSDIYKKHAEQLIENDHAFRCFCSSEELDAMRAEQMANGETPRYDGRCAHLAAEKTEQLVAEGKPHVIRMRVPTEGVCQVQDMLRGTVEIPWTQVDMQVLLKTDGMPTYHLANVVDDHLMDISHVMRGEEWLNSAPKHQLLYEYFGWEMPVLCHMPLLRNPDKSKLSKRKNPTSITYYRDAGVLPEALLNYLGRMGYSMPDEAEQFTLEEMIASFDIQRVSLGGPIFDIEKLNWLNSEWLRALTPEELKNKILEWASNSDKLTAIAAAIQPRIELLSDAVNWSGFYFQNLPDINAESFTHKSLTPEQIMDMLQLSLWQLEVLPTWSEENIYATLKGLAAHLDIKMRDFMAPFFIAIAGSTSSTPVMNSMAIIGADMTLTRLRHAVDVLGGLGKKKLKKLEKQAAELPDFLAAE.

The 'HIGH' region signature appears at 20 to 30 (PSPTGFPHVGT). Zn(2+)-binding residues include C117, C119, C144, and H146. A 'KMSKS' region motif is present at residues 261-265 (KLSKR). K264 contributes to the ATP binding site.

The protein belongs to the class-I aminoacyl-tRNA synthetase family. Glutamate--tRNA ligase type 1 subfamily. In terms of assembly, monomer. It depends on Zn(2+) as a cofactor.

It is found in the cytoplasm. It carries out the reaction tRNA(Glu) + L-glutamate + ATP = L-glutamyl-tRNA(Glu) + AMP + diphosphate. Its function is as follows. Catalyzes the attachment of glutamate to tRNA(Glu) in a two-step reaction: glutamate is first activated by ATP to form Glu-AMP and then transferred to the acceptor end of tRNA(Glu). This chain is Glutamate--tRNA ligase, found in Psychrobacter cryohalolentis (strain ATCC BAA-1226 / DSM 17306 / VKM B-2378 / K5).